We begin with the raw amino-acid sequence, 150 residues long: Large ribosomal subunit protein bL9 (150 aa).

This sequence belongs to the bacterial ribosomal protein bL9 family.

In terms of biological role, binds to the 23S rRNA. The protein is Large ribosomal subunit protein bL9 of Hydrogenovibrio crunogenus (strain DSM 25203 / XCL-2) (Thiomicrospira crunogena).